Consider the following 263-residue polypeptide: MKPTTIALLQKCKQEKKRFATITAYDHSFAKLFADEGINVLLVGDSLGMTVQGHDSTLPVTVEDIAYHTRAVRRGAPNSLLLADLPFMAYATPEQTFANAAIVMRAGANMVKLEGGAWLADTVRMLAERAVPVCGHLGLTPQSVNVFGGYKVQGRGDAAQTLFEDALALEAAGAQLLVLECVPVELAKRITDALTIPVIGIGAGNVTDGQILVMHDAFGITGGHIPKFAKNFLAEAGDIRAAVRQYIAEVESGVYPGEEHSFH.

2 residues coordinate Mg(2+): Asp-45 and Asp-84. 3-methyl-2-oxobutanoate is bound by residues 45–46 (DS), Asp-84, and Lys-112. Glu-114 lines the Mg(2+) pocket. The active-site Proton acceptor is Glu-180.

Belongs to the PanB family. Homodecamer; pentamer of dimers. Mg(2+) is required as a cofactor.

It localises to the cytoplasm. It catalyses the reaction 3-methyl-2-oxobutanoate + (6R)-5,10-methylene-5,6,7,8-tetrahydrofolate + H2O = 2-dehydropantoate + (6S)-5,6,7,8-tetrahydrofolate. Its pathway is cofactor biosynthesis; (R)-pantothenate biosynthesis; (R)-pantoate from 3-methyl-2-oxobutanoate: step 1/2. Functionally, catalyzes the reversible reaction in which hydroxymethyl group from 5,10-methylenetetrahydrofolate is transferred onto alpha-ketoisovalerate to form ketopantoate. The chain is 3-methyl-2-oxobutanoate hydroxymethyltransferase from Klebsiella pneumoniae subsp. pneumoniae (strain ATCC 700721 / MGH 78578).